We begin with the raw amino-acid sequence, 309 residues long: Probable manganese-dependent inorganic pyrophosphatase (309 aa).

The Mn(2+) site is built by histidine 9, aspartate 13, aspartate 15, aspartate 75, histidine 97, and aspartate 149.

It belongs to the PPase class C family. Mn(2+) serves as cofactor.

Its subcellular location is the cytoplasm. It catalyses the reaction diphosphate + H2O = 2 phosphate + H(+). The sequence is that of Probable manganese-dependent inorganic pyrophosphatase from Staphylococcus saprophyticus subsp. saprophyticus (strain ATCC 15305 / DSM 20229 / NCIMB 8711 / NCTC 7292 / S-41).